The sequence spans 510 residues: Insulinoma-associated protein 1 (510 aa).

Residues 1–12 (MPRGFLVKRSKK) are compositionally biased toward basic residues. The SNAG domain stretch occupies residues 1 to 20 (MPRGFLVKRSKKSTPVSYRV). Disordered regions lie at residues 1-110 (MPRG…SREH) and 176-226 (GAEA…PKAI). The interval 2-7 (PRGFLV) is required and sufficient for interaction with KDM1A. A necessary for interaction with CCND1 region spans residues 43 to 58 (PPAPSPVPGPLPPPPP). The span at 43–59 (PPAPSPVPGPLPPPPPA) shows a compositional bias: pro residues. 2 stretches are compositionally biased toward low complexity: residues 64 to 74 (AALAAALACAP) and 209 to 218 (EPPAKAVKAP). Residues 267 to 287 (FICQLCKEEYADPFALAQHKC) form a C2H2-type 1; atypical zinc finger. The C2H2-type 2 zinc finger occupies 295-317 (YRCPECAKVFSCPANLASHRRWH). The disordered stretch occupies residues 315-362 (RWHKPRPAPAAARAPEPEAAARAEAREAPGGGSDRDTPSPGGVSESGS). A compositionally biased stretch (basic and acidic residues) spans 329–351 (PEPEAAARAEAREAPGGGSDRDT). C2H2-type zinc fingers lie at residues 367-389 (YECH…LLAH), 441-464 (HLCP…RLLH), and 469-492 (FPCK…NKCH).

This sequence belongs to the INSM1 family. As to quaternary structure, interacts (via the SNAG domain) with HDAC1. Interacts (via the SNAG domain) with HDAC2. Interacts (via the SNAG domain) with KDM1A. Interacts (via the SNAG domain) with RCOR1. Interacts with SORBS1. Interacts (via the N-terminal region) with CCND1 (via cyclin N-terminal domain); the interaction competes with the binding of CCND1 to CDK4 during cell cycle progression and increases its transcriptional repressor activity. Interacts with HDAC3; the interaction increases its transcriptional repressor activity. In terms of tissue distribution, expressed in pancreatic duct cells. Expressed in several tumor cell lines of neuroendocrine origin including pheochromocytoma, medullary thyroid carcinoma, insulinoma, medulloblastoma, retinoblastoma, pheochromacytoma, medullary thyroid carcinoma and small cell lung carcinoma.

It is found in the nucleus. Sequence-specific DNA-binding transcriptional regulator that plays a key role in neurogenesis and neuroendocrine cell differentiation during embryonic and/or fetal development. Binds to the consensus sequence 5'-[TG][TC][TC][TT][GA]GGG[CG]A-3' in target promoters. Acts as a transcriptional repressor of NEUROD1 and INS expression via its interaction with cyclin CCND1 in a cell cycle-independent manner. Negatively regulates skeletal muscle-specific gene expression in endocrine cells of the pituitary by inhibiting the Notch signaling pathway. Represses target gene transcription by recruiting chromatin-modifying factors, such as HDAC1, HDAC2, HDAC3, KDM1A and RCOR1 histone deacetylases. Binds to its own promoter, suggesting autoregulation as a self-control feedback mechanism. Competes with histone H3 for the same binding site on the histone demethylase complex formed by KDM1A and RCOR1, and thereby inhibits demethylation of histone H3 at 'Lys-4'. Promotes the generation and expansion of neuronal basal progenitor cells in the developing neocortex. Involved in the differentiation of endocrine cells of the developing anterior pituitary gland, of the pancreas and intestine, and of sympatho-adrenal cells in the peripheral nervous system. Promotes cell cycle signaling arrest and inhibition of cellular proliferation. The polypeptide is Insulinoma-associated protein 1 (INSM1) (Homo sapiens (Human)).